The sequence spans 105 residues: ATP-dependent Clp protease adapter protein ClpS (105 aa).

This sequence belongs to the ClpS family. Binds to the N-terminal domain of the chaperone ClpA.

Its function is as follows. Involved in the modulation of the specificity of the ClpAP-mediated ATP-dependent protein degradation. The chain is ATP-dependent Clp protease adapter protein ClpS from Klebsiella pneumoniae (strain 342).